The following is a 146-amino-acid chain: Large ribosomal subunit protein uL15 (146 aa).

The segment at 1-58 (MNLSELRPAPGARKKPTRKGQGIGSGLGKTAGKGHKGQNARSGGGVRPGFEGGQMPLQ) is disordered. Composition is skewed to gly residues over residues 21 to 31 (QGIGSGLGKTA) and 42 to 52 (SGGGVRPGFEG).

It belongs to the universal ribosomal protein uL15 family. Part of the 50S ribosomal subunit.

Functionally, binds to the 23S rRNA. This chain is Large ribosomal subunit protein uL15, found in Desulforamulus reducens (strain ATCC BAA-1160 / DSM 100696 / MI-1) (Desulfotomaculum reducens).